A 92-amino-acid polypeptide reads, in one-letter code: Signal recognition particle 19 kDa protein (92 aa).

Belongs to the SRP19 family. In terms of assembly, part of the signal recognition particle protein translocation system, which is composed of SRP and FtsY. Archaeal SRP consists of a 7S RNA molecule of 300 nucleotides and two protein subunits: SRP54 and SRP19.

It localises to the cytoplasm. In terms of biological role, involved in targeting and insertion of nascent membrane proteins into the cytoplasmic membrane. Binds directly to 7S RNA and mediates binding of the 54 kDa subunit of the SRP. This is Signal recognition particle 19 kDa protein from Methanosphaera stadtmanae (strain ATCC 43021 / DSM 3091 / JCM 11832 / MCB-3).